Consider the following 176-residue polypeptide: NAD(P)H-quinone oxidoreductase subunit 6, chloroplastic (176 aa).

5 helical membrane-spanning segments follow: residues 10–30 (ILVL…VLLT), 33–53 (IYSA…YFLL), 60–80 (VAQL…AVMF), 95–115 (IGDG…MTTI), and 152–172 (FYLP…GAIT).

This sequence belongs to the complex I subunit 6 family. NDH is composed of at least 16 different subunits, 5 of which are encoded in the nucleus.

Its subcellular location is the plastid. It localises to the chloroplast thylakoid membrane. It carries out the reaction a plastoquinone + NADH + (n+1) H(+)(in) = a plastoquinol + NAD(+) + n H(+)(out). It catalyses the reaction a plastoquinone + NADPH + (n+1) H(+)(in) = a plastoquinol + NADP(+) + n H(+)(out). NDH shuttles electrons from NAD(P)H:plastoquinone, via FMN and iron-sulfur (Fe-S) centers, to quinones in the photosynthetic chain and possibly in a chloroplast respiratory chain. The immediate electron acceptor for the enzyme in this species is believed to be plastoquinone. Couples the redox reaction to proton translocation, and thus conserves the redox energy in a proton gradient. This Saccharum hybrid (Sugarcane) protein is NAD(P)H-quinone oxidoreductase subunit 6, chloroplastic (ndhG).